The following is a 104-amino-acid chain: Phosphoribosyl-ATP pyrophosphatase (104 aa).

It belongs to the PRA-PH family.

Its subcellular location is the cytoplasm. The enzyme catalyses 1-(5-phospho-beta-D-ribosyl)-ATP + H2O = 1-(5-phospho-beta-D-ribosyl)-5'-AMP + diphosphate + H(+). It functions in the pathway amino-acid biosynthesis; L-histidine biosynthesis; L-histidine from 5-phospho-alpha-D-ribose 1-diphosphate: step 2/9. The polypeptide is Phosphoribosyl-ATP pyrophosphatase (Nitrosococcus oceani (strain ATCC 19707 / BCRC 17464 / JCM 30415 / NCIMB 11848 / C-107)).